Here is a 962-residue protein sequence, read N- to C-terminus: Nonsense-mediated mRNA decay factor SMG8 (962 aa).

The segment at R634–A661 is disordered. The segment covering S639 to A661 has biased composition (low complexity).

The protein belongs to the SMG8 family.

Involved in nonsense-mediated decay (NMD) of mRNAs containing premature stop codons. Probable component of kinase complex containing nonC and recruited to stalled ribosomes. This Drosophila virilis (Fruit fly) protein is Nonsense-mediated mRNA decay factor SMG8.